The following is a 339-amino-acid chain: Phenylalanine--tRNA ligase alpha subunit (339 aa).

Glu250 serves as a coordination point for Mg(2+).

It belongs to the class-II aminoacyl-tRNA synthetase family. Phe-tRNA synthetase alpha subunit type 1 subfamily. In terms of assembly, tetramer of two alpha and two beta subunits. Mg(2+) serves as cofactor.

It localises to the cytoplasm. It catalyses the reaction tRNA(Phe) + L-phenylalanine + ATP = L-phenylalanyl-tRNA(Phe) + AMP + diphosphate + H(+). The sequence is that of Phenylalanine--tRNA ligase alpha subunit from Christiangramia forsetii (strain DSM 17595 / CGMCC 1.15422 / KT0803) (Gramella forsetii).